Here is a 200-residue protein sequence, read N- to C-terminus: Phospholipase A2 inhibitor LNF1 (200 aa).

A signal peptide spans 1-19 (MKYLHTICLLFIFVARGNS). 8 disulfide bridges follow: Cys22–Cys46, Cys25–Cys32, Cys39–Cys67, Cys73–Cys94, Cys95–Cys100, Cys118–Cys143, Cys136–Cys165, and Cys169–Cys191. The N-linked (GlcNAc...) asparagine glycan is linked to Asn176.

The protein belongs to the CNF-like-inhibitor family. In terms of assembly, occurs as a mixture of oligomers. Tetrameric arrangement appears to be the predominant quaternary structure. As to expression, expressed by the liver.

Its subcellular location is the secreted. Inhibits the enzymatic activity of phospholipase A2 (PA2). This is Phospholipase A2 inhibitor LNF1 from Lachesis muta muta (Bushmaster).